The following is a 385-amino-acid chain: Chaperone protein DnaJ (385 aa).

Residues 5 to 70 form the J domain; sequence DYYEVLGVAK…QKRAAYDRYG (66 aa). A CR-type zinc finger spans residues 145–223; the sequence is GFDTEIRVPS…CDGVGRTRRN (79 aa). Residues Cys158, Cys161, Cys175, Cys178, Cys197, Cys200, Cys211, and Cys214 each contribute to the Zn(2+) site. CXXCXGXG motif repeat units follow at residues 158 to 165, 175 to 182, 197 to 204, and 211 to 218; these read CDTCHGSG, CRTCGGSG, CPTCHGTG, and CPSCDGVG.

This sequence belongs to the DnaJ family. Homodimer. Requires Zn(2+) as cofactor.

The protein localises to the cytoplasm. Functionally, participates actively in the response to hyperosmotic and heat shock by preventing the aggregation of stress-denatured proteins and by disaggregating proteins, also in an autonomous, DnaK-independent fashion. Unfolded proteins bind initially to DnaJ; upon interaction with the DnaJ-bound protein, DnaK hydrolyzes its bound ATP, resulting in the formation of a stable complex. GrpE releases ADP from DnaK; ATP binding to DnaK triggers the release of the substrate protein, thus completing the reaction cycle. Several rounds of ATP-dependent interactions between DnaJ, DnaK and GrpE are required for fully efficient folding. Also involved, together with DnaK and GrpE, in the DNA replication of plasmids through activation of initiation proteins. The sequence is that of Chaperone protein DnaJ from Bordetella pertussis (strain Tohama I / ATCC BAA-589 / NCTC 13251).